A 335-amino-acid chain; its full sequence is Zinc-type alcohol dehydrogenase-like protein SAS2087 (335 aa).

Belongs to the zinc-containing alcohol dehydrogenase family. Quinone oxidoreductase subfamily.

In Staphylococcus aureus (strain MSSA476), this protein is Zinc-type alcohol dehydrogenase-like protein SAS2087.